We begin with the raw amino-acid sequence, 20 residues long: Allergen Asp fl 2 (20 aa).

This Aspergillus flavus protein is Allergen Asp fl 2.